Reading from the N-terminus, the 264-residue chain is Nicotinamide N-methyltransferase (264 aa).

At arginine 18 the chain carries Citrulline; alternate. S-adenosyl-L-methionine-binding residues include tyrosine 20, tyrosine 25, glycine 63, tyrosine 69, aspartate 85, threonine 87, and asparagine 90. Residue arginine 132 is modified to Citrulline; alternate. Residues 142–143 (DV) and threonine 163 each bind S-adenosyl-L-methionine. Arginine 181 is subject to Citrulline; alternate. 2 residues coordinate nicotinamide: aspartate 197 and serine 213.

This sequence belongs to the class I-like SAM-binding methyltransferase superfamily. NNMT/PNMT/TEMT family. As to quaternary structure, monomer. Deiminated by PADI1 and PADI2. In terms of tissue distribution, expressed in white adipose tissue and liver (at protein level).

Its subcellular location is the cytoplasm. The enzyme catalyses nicotinamide + S-adenosyl-L-methionine = 1-methylnicotinamide + S-adenosyl-L-homocysteine. The protein operates within cofactor metabolism. It functions in the pathway amino-acid degradation. Its activity is regulated as follows. Inhibited by 6-methoxynicotinamide (JBSNF-000088). Functionally, catalyzes the N-methylation of nicotinamide using the universal methyl donor S-adenosyl-L-methionine to form N1-methylnicotinamide and S-adenosyl-L-homocysteine, a predominant nicotinamide/vitamin B3 clearance pathway. Plays a central role in regulating cellular methylation potential, by consuming S-adenosyl-L-methionine and limiting its availability for other methyltransferases. Actively mediates genome-wide epigenetic and transcriptional changes through hypomethylation of repressive chromatin marks, such as H3K27me3. In a developmental context, contributes to low levels of the repressive histone marks that characterize pluripotent embryonic stem cell pre-implantation state. Acts as a metabolic regulator primarily on white adipose tissue energy expenditure as well as hepatic gluconeogenesis and cholesterol biosynthesis. In white adipocytes, regulates polyamine flux by consuming S-adenosyl-L-methionine which provides for propylamine group in polyamine biosynthesis, whereas by consuming nicotinamide controls NAD(+) levels through the salvage pathway. Via its product N1-methylnicotinamide regulates protein acetylation in hepatocytes, by repressing the ubiquitination and increasing the stability of SIRT1 deacetylase. Can also N-methylate other pyridines structurally related to nicotinamide and play a role in xenobiotic detoxification. The sequence is that of Nicotinamide N-methyltransferase (Nnmt) from Mus musculus (Mouse).